A 563-amino-acid polypeptide reads, in one-letter code: Arginine--tRNA ligase (563 aa).

Residues 108–118 (PNVAKEMHVGH) carry the 'HIGH' region motif.

Belongs to the class-I aminoacyl-tRNA synthetase family. Monomer.

Its subcellular location is the cytoplasm. The catalysed reaction is tRNA(Arg) + L-arginine + ATP = L-arginyl-tRNA(Arg) + AMP + diphosphate. In Pasteurella multocida (strain Pm70), this protein is Arginine--tRNA ligase (argS).